Reading from the N-terminus, the 484-residue chain is tRNA sulfurtransferase (484 aa).

Positions 63–167 (QAFGERLACI…GDKLYMVTKR (105 aa)) constitute a THUMP domain. ATP is bound by residues 185-186 (LI), K267, G289, and Q298. A disulfide bridge links C346 with C458. The Rhodanese domain occupies 406–484 (IDTNEVVIDI…GYHNVKVYRP (79 aa)). C458 acts as the Cysteine persulfide intermediate in catalysis.

It belongs to the ThiI family.

It localises to the cytoplasm. It catalyses the reaction [ThiI sulfur-carrier protein]-S-sulfanyl-L-cysteine + a uridine in tRNA + 2 reduced [2Fe-2S]-[ferredoxin] + ATP + H(+) = [ThiI sulfur-carrier protein]-L-cysteine + a 4-thiouridine in tRNA + 2 oxidized [2Fe-2S]-[ferredoxin] + AMP + diphosphate. The catalysed reaction is [ThiS sulfur-carrier protein]-C-terminal Gly-Gly-AMP + S-sulfanyl-L-cysteinyl-[cysteine desulfurase] + AH2 = [ThiS sulfur-carrier protein]-C-terminal-Gly-aminoethanethioate + L-cysteinyl-[cysteine desulfurase] + A + AMP + 2 H(+). It participates in cofactor biosynthesis; thiamine diphosphate biosynthesis. Functionally, catalyzes the ATP-dependent transfer of a sulfur to tRNA to produce 4-thiouridine in position 8 of tRNAs, which functions as a near-UV photosensor. Also catalyzes the transfer of sulfur to the sulfur carrier protein ThiS, forming ThiS-thiocarboxylate. This is a step in the synthesis of thiazole, in the thiamine biosynthesis pathway. The sulfur is donated as persulfide by IscS. In Shewanella sp. (strain MR-4), this protein is tRNA sulfurtransferase.